The following is a 127-amino-acid chain: 3-aminoacrylate deaminase RutC (127 aa).

Belongs to the RutC family.

It carries out the reaction (Z)-3-aminoacrylate + H2O + H(+) = 3-oxopropanoate + NH4(+). Functionally, involved in pyrimidine catabolism. Catalyzes the deamination of 3-aminoacrylate to malonic semialdehyde, a reaction that can also occur spontaneously. RutC may facilitate the reaction and modulate the metabolic fitness, rather than catalyzing essential functions. The protein is 3-aminoacrylate deaminase RutC of Pseudomonas savastanoi pv. phaseolicola (strain 1448A / Race 6) (Pseudomonas syringae pv. phaseolicola (strain 1448A / Race 6)).